A 400-amino-acid polypeptide reads, in one-letter code: Enoyl-[acyl-carrier-protein] reductase [NADH] (400 aa).

NAD(+)-binding positions include 48 to 53 (GSSSGY), 74 to 75 (FE), 111 to 112 (DA), and 139 to 140 (LA). Tyr-225 serves as a coordination point for substrate. Tyr-235 functions as the Proton donor in the catalytic mechanism. Residues Lys-244 and 273 to 275 (VVT) each bind NAD(+).

It belongs to the TER reductase family. In terms of assembly, monomer.

The catalysed reaction is a 2,3-saturated acyl-[ACP] + NAD(+) = a (2E)-enoyl-[ACP] + NADH + H(+). It participates in lipid metabolism; fatty acid biosynthesis. Its function is as follows. Involved in the final reduction of the elongation cycle of fatty acid synthesis (FAS II). Catalyzes the reduction of a carbon-carbon double bond in an enoyl moiety that is covalently linked to an acyl carrier protein (ACP). In Shewanella baltica (strain OS185), this protein is Enoyl-[acyl-carrier-protein] reductase [NADH].